The following is a 422-amino-acid chain: Structural polyprotein (422 aa).

The Extracellular segment spans residues 1 to 359; that stretch reads SVTEHFNVYK…WPHEIIQYYY (359 aa). Asn200 and Asn262 each carry an N-linked (GlcNAc...) asparagine; by host glycan. The chain crosses the membrane as a helical span at residues 360-382; sequence GLYPAATIAAVSGXSLMALLTLA. The Cytoplasmic segment spans residues 383–422; the sequence is ATCCMLATARRKCLTPYALTPGAVVPLTLGLXXCAPRANA. S-palmitoyl cysteine; by host attachment occurs at residues Cys385, Cys395, and Cys416. Residues 395–415 are transient transmembrane before p62-6K protein processing; that stretch reads CLTPYALTPGAVVPLTLGLXX.

In terms of assembly, spike glycoprotein E2: Processing of the precursor of protein E3/E2 into E2 and E3 results in a heterodimer of the spike glycoproteins E2 and E1. Spike glycoprotein E2: Spike at virion surface are constituted of three E2-E1 heterodimers. Spike glycoprotein E2: Interacts with 6K protein. Post-translationally, structural polyprotein: Specific enzymatic cleavages in vivo yield mature proteins. Capsid protein is auto-cleaved during polyprotein translation, unmasking a signal peptide at the N-terminus of the precursor of E3/E2. The remaining polyprotein is then targeted to the host endoplasmic reticulum, where host signal peptidase cleaves it into pE2, 6K and E1 proteins. pE2 is further processed to mature E3 and E2 by host furin in trans-Golgi vesicle. In terms of processing, spike glycoprotein E2: Palmitoylated via thioester bonds. These palmitoylations may induce disruption of the C-terminus transmembrane. This would result in the reorientation of E2 C-terminus from lumenal to cytoplasmic side. Spike glycoprotein E2: N-glycosylated.

Its subcellular location is the virion membrane. The protein resides in the host cell membrane. Functionally, spike glycoprotein E2: Plays a role in viral attachment to target host cell, by binding to the cell receptor. Synthesized as a p62 precursor which is processed by furin at the cell membrane just before virion budding, giving rise to E2-E1 heterodimer. The p62-E1 heterodimer is stable, whereas E2-E1 is unstable and dissociate at low pH. p62 is processed at the last step, presumably to avoid E1 fusion activation before its final export to cell surface. E2 C-terminus contains a transitory transmembrane that would be disrupted by palmitoylation, resulting in reorientation of the C-terminal tail from lumenal to cytoplasmic side. This step is critical since E2 C-terminus is involved in budding by interacting with capsid proteins. This release of E2 C-terminus in cytoplasm occurs lately in protein export, and precludes premature assembly of particles at the endoplasmic reticulum membrane. The sequence is that of Structural polyprotein from Ross river virus (strain 213970) (RRV).